Reading from the N-terminus, the 300-residue chain is Acetylglutamate kinase (300 aa).

Residues glycine 73 to glycine 74, arginine 95, and asparagine 197 each bind substrate.

The protein belongs to the acetylglutamate kinase family. ArgB subfamily.

It localises to the cytoplasm. It carries out the reaction N-acetyl-L-glutamate + ATP = N-acetyl-L-glutamyl 5-phosphate + ADP. It functions in the pathway amino-acid biosynthesis; L-arginine biosynthesis; N(2)-acetyl-L-ornithine from L-glutamate: step 2/4. Catalyzes the ATP-dependent phosphorylation of N-acetyl-L-glutamate. The polypeptide is Acetylglutamate kinase (Polynucleobacter necessarius subsp. necessarius (strain STIR1)).